Consider the following 68-residue polypeptide: ATP synthase F(0) complex subunit 8 (68 aa).

A helical transmembrane segment spans residues Val-8 to Met-24. Lys-54 is subject to N6-acetyllysine; alternate. Lys-54 carries the post-translational modification N6-succinyllysine; alternate. Lys-57 carries the N6-acetyllysine modification.

It belongs to the ATPase protein 8 family. Component of the ATP synthase complex composed at least of ATP5F1A/subunit alpha, ATP5F1B/subunit beta, ATP5MC1/subunit c (homooctomer), MT-ATP6/subunit a, MT-ATP8/subunit 8, ATP5ME/subunit e, ATP5MF/subunit f, ATP5MG/subunit g, ATP5MK/subunit k, ATP5MJ/subunit j, ATP5F1C/subunit gamma, ATP5F1D/subunit delta, ATP5F1E/subunit epsilon, ATP5PF/subunit F6, ATP5PB/subunit b, ATP5PD/subunit d, ATP5PO/subunit OSCP. ATP synthase complex consists of a soluble F(1) head domain (subunits alpha(3) and beta(3)) - the catalytic core - and a membrane F(0) domain - the membrane proton channel (subunits c, a, 8, e, f, g, k and j). These two domains are linked by a central stalk (subunits gamma, delta, and epsilon) rotating inside the F1 region and a stationary peripheral stalk (subunits F6, b, d, and OSCP). Interacts with PRICKLE3.

The protein localises to the mitochondrion membrane. Subunit 8, of the mitochondrial membrane ATP synthase complex (F(1)F(0) ATP synthase or Complex V) that produces ATP from ADP in the presence of a proton gradient across the membrane which is generated by electron transport complexes of the respiratory chain. ATP synthase complex consist of a soluble F(1) head domain - the catalytic core - and a membrane F(1) domain - the membrane proton channel. These two domains are linked by a central stalk rotating inside the F(1) region and a stationary peripheral stalk. During catalysis, ATP synthesis in the catalytic domain of F(1) is coupled via a rotary mechanism of the central stalk subunits to proton translocation. In vivo, can only synthesize ATP although its ATP hydrolase activity can be activated artificially in vitro. Part of the complex F(0) domain. This Symphalangus syndactylus (Siamang) protein is ATP synthase F(0) complex subunit 8.